The following is a 139-amino-acid chain: Sec-independent protein translocase protein TatB (139 aa).

Residues 1–21 (MFDMGFLELMLIGVVALLVLG) form a helical membrane-spanning segment. The segment covering 66 to 86 (QQRKLDAGLGKVRDEVERHGD) has biased composition (basic and acidic residues). The interval 66–139 (QQRKLDAGLG…APSAKDSNAP (74 aa)) is disordered.

It belongs to the TatB family. In terms of assembly, the Tat system comprises two distinct complexes: a TatABC complex, containing multiple copies of TatA, TatB and TatC subunits, and a separate TatA complex, containing only TatA subunits. Substrates initially bind to the TatABC complex, which probably triggers association of the separate TatA complex to form the active translocon.

The protein resides in the cell inner membrane. Its function is as follows. Part of the twin-arginine translocation (Tat) system that transports large folded proteins containing a characteristic twin-arginine motif in their signal peptide across membranes. Together with TatC, TatB is part of a receptor directly interacting with Tat signal peptides. TatB may form an oligomeric binding site that transiently accommodates folded Tat precursor proteins before their translocation. This chain is Sec-independent protein translocase protein TatB, found in Chromohalobacter salexigens (strain ATCC BAA-138 / DSM 3043 / CIP 106854 / NCIMB 13768 / 1H11).